Here is a 461-residue protein sequence, read N- to C-terminus: Nuclear distribution protein PAC1 (461 aa).

Residues 9-41 form the LisH domain; the sequence is QAEELHKSIIAYLTANNLLNTANTLRAELNLSE. WD repeat units follow at residues 114–155, 157–197, 201–248, 251–290, 312–355, 357–396, and 401–457; these read SHRD…RTIK, HTRA…KNIR, GHDH…CVRT, GHTAWVRDVYPSPDGRFLLSTGDDSTARLWDISVSNPESK, QYLS…LMTL, GHDNWIRALAFHPGGKYLFSVSDDRTLRCWDLSQEGKCIK, and AHER…MKLR.

Belongs to the WD repeat LIS1/nudF family. As to quaternary structure, self-associates. Interacts with NDL1 and dynein.

Its subcellular location is the cytoplasm. The protein resides in the cytoskeleton. It is found in the spindle pole. Positively regulates the activity of the minus-end directed microtubule motor protein dynein. May enhance dynein-mediated microtubule sliding by targeting dynein to the microtubule plus end. Required for nuclear migration during vegetative growth as well as development. Required for retrograde early endosome (EE) transport from the hyphal tip. Required for localization of dynein to the mitotic spindle poles. Recruits additional proteins to the dynein complex at SPBs. This Arthroderma otae (strain ATCC MYA-4605 / CBS 113480) (Microsporum canis) protein is Nuclear distribution protein PAC1.